The chain runs to 39 residues: uncharacterized protein (39 aa).

A signal peptide spans 1–21 (MHLRSRWWLALLYCKDPVSRS).

This is an uncharacterized protein from Saccharomyces cerevisiae (strain ATCC 204508 / S288c) (Baker's yeast).